The primary structure comprises 815 residues: (-)-kolavenyl diphosphate synthase TPS28, chloroplastic (815 aa).

A chloroplast-targeting transit peptide spans 1–51 (MFMSSSSSSHARRPQLSSFSYLHPPLPFPGLSFFNTRDKRVNFDSTRIICI). Position 247 (Lys247) interacts with substrate. Asp379 and Asp381 together coordinate Mg(2+). A DXDD motif motif is present at residues 379–382 (DIDD). Lys465 is a substrate binding site.

This sequence belongs to the terpene synthase family. Tpsc subfamily. Requires Mg(2+) as cofactor.

The protein localises to the plastid. The protein resides in the chloroplast. The enzyme catalyses (2E,6E,10E)-geranylgeranyl diphosphate = (-)-kolavenyl diphosphate. With respect to regulation, inhibited by high concentrations of magnesium. Functionally, diterpene synthase that catalyzes the formation of (-)-kolavenyl diphosphate from geranylgeranyl diphosphate (GGPP). The sequence is that of (-)-kolavenyl diphosphate synthase TPS28, chloroplastic from Tripterygium wilfordii (Thunder God vine).